The sequence spans 820 residues: Probable beta-glucosidase ARB_05654 (820 aa).

The first 18 residues, 1 to 18 (MLFRWCPLVALAIASGTA), serve as a signal peptide directing secretion. Residues asparagine 62 and asparagine 276 are each glycosylated (N-linked (GlcNAc...) asparagine). Aspartate 304 is a catalytic residue. N-linked (GlcNAc...) asparagine glycosylation is found at asparagine 339, asparagine 346, asparagine 465, asparagine 547, asparagine 566, asparagine 588, and asparagine 811.

This sequence belongs to the glycosyl hydrolase 3 family.

It localises to the secreted. It carries out the reaction Hydrolysis of terminal, non-reducing beta-D-glucosyl residues with release of beta-D-glucose.. It participates in glycan metabolism; cellulose degradation. Beta-glucosidases are one of a number of cellulolytic enzymes involved in the degradation of cellulosic biomass. Catalyzes the last step releasing glucose from the inhibitory cellobiose. The protein is Probable beta-glucosidase ARB_05654 of Arthroderma benhamiae (strain ATCC MYA-4681 / CBS 112371) (Trichophyton mentagrophytes).